A 117-amino-acid polypeptide reads, in one-letter code: UPF0125 protein VV0820 (117 aa).

Residues 90–117 are disordered; the sequence is RKRAEQAKESGAADPVTGGKPSPLRKAD.

It belongs to the UPF0125 (RnfH) family.

The chain is UPF0125 protein VV0820 from Vibrio vulnificus (strain YJ016).